Consider the following 678-residue polypeptide: DNA ligase (678 aa).

Residues 47–51, 96–97, and glutamate 122 contribute to the NAD(+) site; these read DSDYD and SL. Lysine 124 functions as the N6-AMP-lysine intermediate in the catalytic mechanism. Residues arginine 145, glutamate 182, lysine 300, and lysine 324 each coordinate NAD(+). Zn(2+) contacts are provided by cysteine 418, cysteine 421, cysteine 436, and cysteine 442. A BRCT domain is found at 602–678; that stretch reads AYNESFTGKT…ILEDNLKDLL (77 aa).

The protein belongs to the NAD-dependent DNA ligase family. LigA subfamily. Mg(2+) serves as cofactor. Mn(2+) is required as a cofactor.

It carries out the reaction NAD(+) + (deoxyribonucleotide)n-3'-hydroxyl + 5'-phospho-(deoxyribonucleotide)m = (deoxyribonucleotide)n+m + AMP + beta-nicotinamide D-nucleotide.. Functionally, DNA ligase that catalyzes the formation of phosphodiester linkages between 5'-phosphoryl and 3'-hydroxyl groups in double-stranded DNA using NAD as a coenzyme and as the energy source for the reaction. It is essential for DNA replication and repair of damaged DNA. The polypeptide is DNA ligase (Francisella tularensis subsp. holarctica (strain FTNF002-00 / FTA)).